We begin with the raw amino-acid sequence, 132 residues long: D-ribose pyranase (132 aa).

His20 (proton donor) is an active-site residue. Substrate contacts are provided by residues Asp28, His99, and 121–123 (YSN).

This sequence belongs to the RbsD / FucU family. RbsD subfamily. As to quaternary structure, homodecamer.

It is found in the cytoplasm. The enzyme catalyses beta-D-ribopyranose = beta-D-ribofuranose. Its pathway is carbohydrate metabolism; D-ribose degradation; D-ribose 5-phosphate from beta-D-ribopyranose: step 1/2. Its function is as follows. Catalyzes the interconversion of beta-pyran and beta-furan forms of D-ribose. The polypeptide is D-ribose pyranase (Streptococcus agalactiae serotype V (strain ATCC BAA-611 / 2603 V/R)).